A 123-amino-acid chain; its full sequence is Small ribosomal subunit protein uS13 (123 aa).

The disordered stretch occupies residues 93-123; sequence HRKGLPVRGQNTKNNARTRKGPAKAIAGKKK. Basic residues predominate over residues 108–123; it reads ARTRKGPAKAIAGKKK.

It belongs to the universal ribosomal protein uS13 family. Part of the 30S ribosomal subunit. Forms a loose heterodimer with protein S19. Forms two bridges to the 50S subunit in the 70S ribosome.

In terms of biological role, located at the top of the head of the 30S subunit, it contacts several helices of the 16S rRNA. In the 70S ribosome it contacts the 23S rRNA (bridge B1a) and protein L5 of the 50S subunit (bridge B1b), connecting the 2 subunits; these bridges are implicated in subunit movement. Contacts the tRNAs in the A and P-sites. This Leuconostoc citreum (strain KM20) protein is Small ribosomal subunit protein uS13.